The chain runs to 116 residues: MASIIFTPKDIFDQDFKTAVRGYSKQEVDEFLDDVIKDYETYSALVKELREENSRLKQELSKRMQEAPNSTASQVHQSFGDTTQTTITNFDILKRLSRLEKEVFGKQIQASELNQL.

Residues 32 to 69 (LDDVIKDYETYSALVKELREENSRLKQELSKRMQEAPN) are a coiled coil. The segment at 57-78 (KQELSKRMQEAPNSTASQVHQS) is disordered. Over residues 67 to 78 (APNSTASQVHQS) the composition is skewed to polar residues.

This sequence belongs to the GpsB family. Forms polymers through the coiled coil domains. Interacts with PBP1, MreC and EzrA.

The protein localises to the cytoplasm. In terms of biological role, divisome component that associates with the complex late in its assembly, after the Z-ring is formed, and is dependent on DivIC and PBP2B for its recruitment to the divisome. Together with EzrA, is a key component of the system that regulates PBP1 localization during cell cycle progression. Its main role could be the removal of PBP1 from the cell pole after pole maturation is completed. Also contributes to the recruitment of PBP1 to the division complex. Not essential for septum formation. This Streptococcus gordonii (strain Challis / ATCC 35105 / BCRC 15272 / CH1 / DL1 / V288) protein is Cell cycle protein GpsB.